Reading from the N-terminus, the 411-residue chain is Glycerol-3-phosphate dehydrogenase [NAD(+)] (411 aa).

NAD(+) is bound by residues 71–76 (GSGNWG), Phe103, and Phe159. Substrate is bound at residue Lys182. Ala215 serves as a coordination point for NAD(+). Lys275 (proton acceptor) is an active-site residue. NAD(+) contacts are provided by Arg340 and Gln369. 340 to 341 (RN) serves as a coordination point for substrate.

It belongs to the NAD-dependent glycerol-3-phosphate dehydrogenase family.

The catalysed reaction is sn-glycerol 3-phosphate + NAD(+) = dihydroxyacetone phosphate + NADH + H(+). This chain is Glycerol-3-phosphate dehydrogenase [NAD(+)] (GPD), found in Lachancea thermotolerans (Yeast).